The chain runs to 306 residues: N-acetylmuramic acid/N-acetylglucosamine kinase (306 aa).

Serine 12 provides a ligand contact to ATP. Asparagine 35 contributes to the substrate binding site. Residue threonine 124 coordinates ATP. Substrate-binding positions include glycine 142 to glycine 144 and aspartate 149. Alanine 208 contributes to the ATP binding site.

Belongs to the eukaryotic-type N-acetylglucosamine kinase family. Mg(2+) serves as cofactor.

It localises to the cytoplasm. It carries out the reaction N-acetyl-D-glucosamine + ATP = N-acetyl-D-glucosamine 6-phosphate + ADP + H(+). It catalyses the reaction N-acetyl-D-muramate + ATP = N-acetyl-D-muramate 6-phosphate + ADP + H(+). Its pathway is cell wall biogenesis; peptidoglycan recycling. In terms of biological role, catalyzes the ATP-dependent phosphorylation of both cell wall (peptidoglycan) amino sugars, N-acetylmuramic acid (MurNAc) and N-acetylglucosamine (GlcNAc), at the 6-hydroxyl group. Neither the non-N-acetylated forms of the cell wall sugars, i.e., glucosamine and/or muramic acid, nor epimeric hexoses or 1,6-anhydro-MurNAc are substrates for the enzyme. May have a role in the rescue of the murein sugars GlcNAc and MurNAc released from muropeptides during cell wall turnover in C.acetobutylicum. This chain is N-acetylmuramic acid/N-acetylglucosamine kinase, found in Clostridium acetobutylicum (strain ATCC 824 / DSM 792 / JCM 1419 / IAM 19013 / LMG 5710 / NBRC 13948 / NRRL B-527 / VKM B-1787 / 2291 / W).